The sequence spans 31 residues: Cytochrome b6-f complex subunit 6 (31 aa).

Residues L4–N26 traverse the membrane as a helical segment.

The protein belongs to the PetL family. In terms of assembly, the 4 large subunits of the cytochrome b6-f complex are cytochrome b6, subunit IV (17 kDa polypeptide, PetD), cytochrome f and the Rieske protein, while the 4 small subunits are PetG, PetL, PetM and PetN. The complex functions as a dimer.

The protein resides in the plastid. The protein localises to the chloroplast thylakoid membrane. Component of the cytochrome b6-f complex, which mediates electron transfer between photosystem II (PSII) and photosystem I (PSI), cyclic electron flow around PSI, and state transitions. PetL is important for photoautotrophic growth as well as for electron transfer efficiency and stability of the cytochrome b6-f complex. The chain is Cytochrome b6-f complex subunit 6 from Amaranthus caudatus (Love-lies-bleeding).